An 88-amino-acid chain; its full sequence is Small ribosomal subunit protein uS15 (88 aa).

It belongs to the universal ribosomal protein uS15 family. Part of the 30S ribosomal subunit. Forms a bridge to the 50S subunit in the 70S ribosome, contacting the 23S rRNA.

One of the primary rRNA binding proteins, it binds directly to 16S rRNA where it helps nucleate assembly of the platform of the 30S subunit by binding and bridging several RNA helices of the 16S rRNA. In terms of biological role, forms an intersubunit bridge (bridge B4) with the 23S rRNA of the 50S subunit in the ribosome. This Metamycoplasma arthritidis (strain 158L3-1) (Mycoplasma arthritidis) protein is Small ribosomal subunit protein uS15.